We begin with the raw amino-acid sequence, 416 residues long: TNF receptor-associated factor 1 (416 aa).

The segment at 1 to 24 (MASSSGSSPRPAPDENEFPFGCPP) is disordered. Serine 146 is modified (phosphoserine). Residues 182-264 (MKEKLLAELE…QSLRLMEEAS (83 aa)) are a coiled coil. Glycyl lysine isopeptide (Lys-Gly) (interchain with G-Cter in ubiquitin) cross-links involve residues lysine 185 and lysine 193. Residues 266 to 412 (DGTFLWKITN…DDTMFLKCIV (147 aa)) form the MATH domain.

In terms of assembly, homotrimer. Heterotrimer with TRAF2. Interacts with TNFRSF1A/TNFR1, TNFRSF1B/TNFR2, TNFRSF4, TNFRSF5/CD40, TNFRSF8/CD30, TNFRSF9/CD137, TNFRSF11A/RANK, TNFRSF13C, TNFRSF18/AITR, TNFRSF17/BCMA, TNFRSF19/TROY, TNFRSF19L/RELT, XEDAR, EDAR, Epstein-Barr virus BNFL1/LMP-1, TANK/ITRAF, TRAIP and RIPK2. Interacts with BIRC2 and BIRC3 N-terminus; a single BIRC2 or BIRC3 molecule interacts with a heterotrimer formed by TRAF1 and TRAF2. Interacts with NFATC2IP, TRAFD1 and with HIVEP3. Interacts with MAP3K14. Interacts with GPS2. In terms of processing, polyubiquitinated by BIRC2 and/or BIRC3, leading to its subsequent proteasomal degradation. Ubiquitinated by the SCF(FBXL2) complex, leading to its degradation by the proteasome.

Functionally, adapter molecule that regulates the activation of NF-kappa-B and JNK. Plays a role in the regulation of cell survival and apoptosis. The heterotrimer formed by TRAF1 and TRAF2 is part of a E3 ubiquitin-protein ligase complex that promotes ubiquitination of target proteins, such as MAP3K14. The TRAF1/TRAF2 complex recruits the antiapoptotic E3 protein-ubiquitin ligases BIRC2 and BIRC3 to TNFRSF1B/TNFR2. In Homo sapiens (Human), this protein is TNF receptor-associated factor 1 (TRAF1).